A 599-amino-acid polypeptide reads, in one-letter code: Matrix metallopeptidase-21 (599 aa).

The N-terminal stretch at 1 to 20 (MLTVIRRIFIIQTFIFITAE) is a signal peptide. Residues 21 to 170 (KIFHSRDHSD…NHEHQAPVRK (150 aa)) constitute a propeptide that is removed on maturation. Residue Cys-130 participates in Zn(2+) binding. The tract at residues 141-170 (DVTGSNSTRNHIRTSTNTSHNHEHQAPVRK) is disordered. Residues 143 to 159 (TGSNSTRNHIRTSTNTS) are compositionally biased toward polar residues. His-309 contributes to the Zn(2+) binding site. Residue Glu-310 is part of the active site. The Zn(2+) site is built by His-313 and His-319. An intrachain disulfide couples Cys-355 to Cys-586. Hemopexin repeat units follow at residues 356–415 (TGRF…WHGL), 417–473 (SGGV…FPGV), 474–522 (SGPL…FPAI), and 529–585 (VRSL…WFDI). Asn-398 carries an N-linked (GlcNAc...) asparagine glycan.

Belongs to the peptidase M10A family. Post-translationally, the precursor is cleaved by a furin endopeptidase.

In terms of biological role, plays a specialized role in the generation of left-right asymmetry during embryogenesis. May act as a negative regulator of the NOTCH-signaling pathway. The polypeptide is Matrix metallopeptidase-21 (Danio rerio (Zebrafish)).